Here is a 406-residue protein sequence, read N- to C-terminus: Tyrosine--tRNA ligase (406 aa).

Residues 48–57 carry the 'HIGH' region motif; that stretch reads PSRPDLHLGH. Residues 232-236 carry the 'KMSKS' region motif; the sequence is KMSKS. Lysine 235 is a binding site for ATP. An S4 RNA-binding domain is found at 339 to 401; it reads MPVVELLMAL…GKRKFFKVAR (63 aa).

The protein belongs to the class-I aminoacyl-tRNA synthetase family. TyrS type 2 subfamily. In terms of assembly, homodimer.

The protein resides in the cytoplasm. The enzyme catalyses tRNA(Tyr) + L-tyrosine + ATP = L-tyrosyl-tRNA(Tyr) + AMP + diphosphate + H(+). Functionally, catalyzes the attachment of tyrosine to tRNA(Tyr) in a two-step reaction: tyrosine is first activated by ATP to form Tyr-AMP and then transferred to the acceptor end of tRNA(Tyr). This Chlorobaculum tepidum (strain ATCC 49652 / DSM 12025 / NBRC 103806 / TLS) (Chlorobium tepidum) protein is Tyrosine--tRNA ligase.